The following is a 147-amino-acid chain: Lysozyme C (147 aa).

Positions 1–18 (MKALVILGFLFLSVAVQG) are cleaved as a signal peptide. The C-type lysozyme domain occupies 19–147 (KVFERCELAR…VSSYVEGCTL (129 aa)). Cystine bridges form between Cys24/Cys145, Cys48/Cys133, Cys83/Cys99, and Cys95/Cys113. Catalysis depends on residues Glu53 and Asp71.

The protein belongs to the glycosyl hydrolase 22 family. As to quaternary structure, monomer. As to expression, stomach-specific.

The catalysed reaction is Hydrolysis of (1-&gt;4)-beta-linkages between N-acetylmuramic acid and N-acetyl-D-glucosamine residues in a peptidoglycan and between N-acetyl-D-glucosamine residues in chitodextrins.. Lysozymes have primarily a bacteriolytic function; those in tissues and body fluids are associated with the monocyte-macrophage system and enhance the activity of immunoagents. The polypeptide is Lysozyme C (LYZ1) (Bos taurus (Bovine)).